The chain runs to 301 residues: MPKPIALSRNPSTPLFQWRAYYEMTKPKVVALMLLTVLVGMCLAVPGVVPIVPLIAGMAGIGMMAGSAAAFNHLIDRRIDGLMARTYNRPLPKGRVSIAKALTFSCSLGILGFVVLYVLVNPLTAWLTFASLIGYAVVYTAYLKRATPQNIVVGGLAGAMPPLLGWTAVTGEFHGNALLLVIIIFAWTPPHFWALAIHRRVEYAKVDIPMLPVTHGVEFTKTCIFLYTILLAIACLLPVLVGMCGPVYLVSSTLLSVTFIYKAWQLKFHEEPGMAMKLFKFSIYHLMLLFIALLVDHYLWL.

9 helical membrane passes run 29–49, 51–71, 96–118, 123–143, 151–171, 177–197, 223–243, 244–264, and 281–301; these read VVAL…PGVV, IVPL…AAAF, VSIA…VLYV, LTAW…TAYL, IVVG…AVTG, ALLL…ALAI, CIFL…LVGM, CGPV…YKAW, and FSIY…YLWL.

This sequence belongs to the UbiA prenyltransferase family. Protoheme IX farnesyltransferase subfamily.

Its subcellular location is the cell inner membrane. The enzyme catalyses heme b + (2E,6E)-farnesyl diphosphate + H2O = Fe(II)-heme o + diphosphate. Its pathway is porphyrin-containing compound metabolism; heme O biosynthesis; heme O from protoheme: step 1/1. Converts heme B (protoheme IX) to heme O by substitution of the vinyl group on carbon 2 of heme B porphyrin ring with a hydroxyethyl farnesyl side group. In Shewanella halifaxensis (strain HAW-EB4), this protein is Protoheme IX farnesyltransferase.